A 260-amino-acid chain; its full sequence is Ribosomal RNA small subunit methyltransferase G (260 aa).

Gly111, Phe116, and Arg181 together coordinate S-adenosyl-L-methionine.

The protein belongs to the methyltransferase superfamily. RNA methyltransferase RsmG family.

It localises to the cytoplasm. It catalyses the reaction guanosine(527) in 16S rRNA + S-adenosyl-L-methionine = N(7)-methylguanosine(527) in 16S rRNA + S-adenosyl-L-homocysteine. In terms of biological role, specifically methylates the N7 position of guanine in position 527 of 16S rRNA. The protein is Ribosomal RNA small subunit methyltransferase G of Nitrobacter hamburgensis (strain DSM 10229 / NCIMB 13809 / X14).